The chain runs to 210 residues: GRF1-interacting factor 1 (210 aa).

Over residues 135–152 the composition is skewed to low complexity; it reads ATLQHQQLHHSQLGMSSS. Positions 135-210 are disordered; it reads ATLQHQQLHH…LYLKSSDDGN (76 aa). The span at 182–198 shows a compositional bias: gly residues; that stretch reads GSGGGGEGRGGSSGDGG.

It belongs to the SS18 family. As to quaternary structure, interacts with GRF1, GRF2, GRF5 and GRF9. In terms of tissue distribution, strongly expressed in actively growing and developing tissues, such as roots, upper stems, and shoot tips and flower buds. Also expressed in mature flowers. Not expressed in the shoot apical meristem (SAM). Highly accumulated in the proximal part of leaf primordia, in the key proliferative zone at the junction region between the leaf blade and leaf petiole.

Functionally, transcription coactivator that plays a role in the regulation of cell expansion in leaf and cotyledons tissues. Component of a network formed by miR396, the GRFs and their interacting factors (GIFs) acting in the regulation of meristem function, at least partially through the control of cell proliferation. Appears to function synergistically with GRF1 as a transcriptional coactivator. Acts together with GRF5 for the development of appropriate leaf size and shape through the promotion and/or maintenance of cell proliferation activity in leaf primordia. Plays a role in adaxial/abaxial patterning and growth in leaf morphogenesis. GIFs are involved in the positive regulation of cell proliferation of lateral organs in a functionally redundant manner. Together with GATA18/HAN, mediates cotyledon identity by preventing ectopic root formation through the repression of PLT1 expression. In Arabidopsis thaliana (Mouse-ear cress), this protein is GRF1-interacting factor 1.